We begin with the raw amino-acid sequence, 748 residues long: Chondroadherin-like protein (748 aa).

The signal sequence occupies residues 1-29; the sequence is MERPQSSIWVFMLLLFMVLLQSPAWHVAA. The region spanning 30–61 is the LRRNT 1 domain; it reads QRCPQTCVCDNSRRHVTCRHQNLTEVPNTIPE. The N-linked (GlcNAc...) asparagine glycan is linked to Asn51. LRR repeat units lie at residues 85 to 107, 108 to 131, 132 to 155, 156 to 179, 181 to 203, 204 to 227, 229 to 252, 253 to 275, and 276 to 299; these read PHLTHLDLRNCQVEMVAEGAFRG, LGRLLLLNLASNRLSTLPQEALDG, LGSLRRLELEGNMLEELRPGTFGA, LGSLTTLNLAHNALVYLPAMAFQG, LRTRWLQLSHNALSVLAPEALAG, LPALRRLSLHHNELQALPGAALSQ, RSLARLELGHNPLTYTGEEDGLAL, PGLRELALDHGSLQALGPRAFAH, and CPRLHTLDLRGNQLTTLPPLQVPG. Positions 309–357 constitute an LRRCT 1 domain; it reads NPLWCACHARPLLEWLVRARVRSDGACRGPRRLRGEALDTLRPSDLRCP. The tract at residues 352 to 389 is disordered; the sequence is SDLRCPGDAAAGDGDGDEDEDRPAGPRAPPLRSPHGEA. The LRRNT 2 domain maps to 394 to 428; that stretch reads PCPPACACVAETRHSTCDGRGLQAVPRGFPNDTQL. Cys395 and Cys410 are joined by a disulfide. LRR repeat units lie at residues 423 to 446, 448 to 470, 471 to 494, 496 to 518, 519 to 542, 544 to 566, 567 to 590, 591 to 614, 616 to 639, and 641 to 665; these read PNDTQLLDLRRNHFPSVPRAAFPG, RHLVSLHLQHCGVAELEPGALAG, LDRLLYLYLSHNQLSGLSAAALEG, PNLGYLYLEHNRFLRIPGTALRA, LPTLVSLHLQDNAVDRLAPGDLAG, RALRCLYLSGNHITQVSPGALGP, ARELEKLHLDRNRLREVPTGALEG, LPALKELQLSGNPLRALPDGAFQP, GRSLQQLFLNSSDLEQISPRAFSG, and GKGLRSLYLHKNQLQSLPAPLGLSG. A glycan (N-linked (GlcNAc...) asparagine) is linked at Asn625. An LRRCT 2 domain is found at 674 to 722; the sequence is NPFHCDCQLLPLHRWLTGLNLRVGATCATPPSVRGQKVKVAAPVFEACP. Intrachain disulfides connect Cys678–Cys721 and Cys680–Cys700. The tract at residues 728–748 is disordered; it reads KAKRTPTSRGSARRTPSLSRH. Over residues 734 to 748 the composition is skewed to polar residues; sequence TSRGSARRTPSLSRH.

Belongs to the small leucine-rich proteoglycan (SLRP) family. SLRP class IV subfamily. As to quaternary structure, associates with collagen and binds to collagen fibrils. Expressed in cartilage, including articular knee cartilage, where it localizes to the extracellular space in the area immediately surrounding the chondrocytes, not detected in any other tissues (at protein level).

It localises to the secreted. It is found in the extracellular space. Its subcellular location is the extracellular matrix. Its function is as follows. Potential negative modulator of chondrocyte differentiation. Inhibits collagen fibrillogenesis in vitro. May influence chondrocyte's differentiation by acting on its cellular collagenous microenvironment. The chain is Chondroadherin-like protein (Chadl) from Mus musculus (Mouse).